Here is a 560-residue protein sequence, read N- to C-terminus: Eukaryotic translation initiation factor 3 subunit D-1 (560 aa).

Residues Val98 to Ser166 are disordered. The span at Lys100–Asn121 shows a compositional bias: basic residues. Position 128 is a phosphothreonine (Thr128). Residues Gly147–His156 show a composition bias toward basic residues. Positions Glu291–Pro305 are RNA gate.

This sequence belongs to the eIF-3 subunit D family. In terms of assembly, component of the eukaryotic translation initiation factor 3 (eIF-3) complex. The eIF-3 complex interacts with pix.

The protein localises to the cytoplasm. MRNA cap-binding component of the eukaryotic translation initiation factor 3 (eIF-3) complex, which is involved in protein synthesis of a specialized repertoire of mRNAs and, together with other initiation factors, stimulates binding of mRNA and methionyl-tRNAi to the 40S ribosome. The eIF-3 complex specifically targets and initiates translation of a subset of mRNAs involved in cell proliferation. In the eIF-3 complex, eif3d specifically recognizes and binds the 7-methylguanosine cap of a subset of mRNAs. The sequence is that of Eukaryotic translation initiation factor 3 subunit D-1 from Drosophila yakuba (Fruit fly).